We begin with the raw amino-acid sequence, 274 residues long: Dermonecrotic toxin SdSicTox-betaIIB1bxiii (274 aa).

The active site involves H5. Mg(2+) contacts are provided by E25 and D27. Residue H41 is the Nucleophile of the active site. Intrachain disulfides connect C45/C51 and C47/C190. Residue D85 coordinates Mg(2+).

It belongs to the arthropod phospholipase D family. Class II subfamily. It depends on Mg(2+) as a cofactor. In terms of tissue distribution, expressed by the venom gland.

The protein localises to the secreted. It catalyses the reaction an N-(acyl)-sphingosylphosphocholine = an N-(acyl)-sphingosyl-1,3-cyclic phosphate + choline. It carries out the reaction an N-(acyl)-sphingosylphosphoethanolamine = an N-(acyl)-sphingosyl-1,3-cyclic phosphate + ethanolamine. The catalysed reaction is a 1-acyl-sn-glycero-3-phosphocholine = a 1-acyl-sn-glycero-2,3-cyclic phosphate + choline. The enzyme catalyses a 1-acyl-sn-glycero-3-phosphoethanolamine = a 1-acyl-sn-glycero-2,3-cyclic phosphate + ethanolamine. Functionally, dermonecrotic toxins cleave the phosphodiester linkage between the phosphate and headgroup of certain phospholipids (sphingolipid and lysolipid substrates), forming an alcohol (often choline) and a cyclic phosphate. This toxin acts on sphingomyelin (SM). It may also act on ceramide phosphoethanolamine (CPE), lysophosphatidylcholine (LPC) and lysophosphatidylethanolamine (LPE), but not on lysophosphatidylserine (LPS), and lysophosphatidylglycerol (LPG). It acts by transphosphatidylation, releasing exclusively cyclic phosphate products as second products. Induces dermonecrosis, hemolysis, increased vascular permeability, edema, inflammatory response, and platelet aggregation. This chain is Dermonecrotic toxin SdSicTox-betaIIB1bxiii, found in Sicarius cf. damarensis (strain GJB-2008) (Six-eyed sand spider).